We begin with the raw amino-acid sequence, 159 residues long: Small ribosomal subunit protein uS17y (159 aa).

It belongs to the universal ribosomal protein uS17 family.

It is found in the cytoplasm. In Arabidopsis thaliana (Mouse-ear cress), this protein is Small ribosomal subunit protein uS17y (RPS11B).